A 206-amino-acid polypeptide reads, in one-letter code: Small ribosomal subunit protein uS4 (206 aa).

Positions 96–157 (SRLDNVVYRM…KAQKQLRVQA (62 aa)) constitute an S4 RNA-binding domain.

It belongs to the universal ribosomal protein uS4 family. Part of the 30S ribosomal subunit. Contacts protein S5. The interaction surface between S4 and S5 is involved in control of translational fidelity.

Its function is as follows. One of the primary rRNA binding proteins, it binds directly to 16S rRNA where it nucleates assembly of the body of the 30S subunit. With S5 and S12 plays an important role in translational accuracy. The protein is Small ribosomal subunit protein uS4 of Alkalilimnicola ehrlichii (strain ATCC BAA-1101 / DSM 17681 / MLHE-1).